We begin with the raw amino-acid sequence, 348 residues long: Beta-hexosaminidase (348 aa).

Residues D64, R72, R138, and K168–H169 each bind substrate. H181 acts as the Proton donor/acceptor in catalysis. D252 acts as the Nucleophile in catalysis.

This sequence belongs to the glycosyl hydrolase 3 family. NagZ subfamily.

Its subcellular location is the cytoplasm. The catalysed reaction is Hydrolysis of terminal non-reducing N-acetyl-D-hexosamine residues in N-acetyl-beta-D-hexosaminides.. The protein operates within cell wall biogenesis; peptidoglycan recycling. In terms of biological role, plays a role in peptidoglycan recycling by cleaving the terminal beta-1,4-linked N-acetylglucosamine (GlcNAc) from peptide-linked peptidoglycan fragments, giving rise to free GlcNAc, anhydro-N-acetylmuramic acid and anhydro-N-acetylmuramic acid-linked peptides. This is Beta-hexosaminidase from Alkalilimnicola ehrlichii (strain ATCC BAA-1101 / DSM 17681 / MLHE-1).